Consider the following 115-residue polypeptide: Cholecystokinin (115 aa).

Residues 1 to 20 (MNRGVCLCLLMAVLAAGALA) form the signal peptide. Positions 21–44 (QPMPHADPTGPRAQQAEEAPRRQL) are excised as a propeptide. Residues 21–44 (QPMPHADPTGPRAQQAEEAPRRQL) form a disordered region. Tyrosine 97 is modified (sulfotyrosine). Phenylalanine 103 is subject to Phenylalanine amide. Positions 107–115 (SAEEFEYTS) are excised as a propeptide. At tyrosine 113 the chain carries Sulfotyrosine.

It belongs to the gastrin/cholecystokinin family. In terms of assembly, binds to CCK-A receptors in the pancreas and CCK-B receptors in the brain. The precursor is cleaved by proteases to produce a number of active cholecystokinins. In terms of processing, the precursor is cleaved by ACE, which removes the Gly-Arg-Arg peptide at the C-terminus, leading to mature hormone.

The protein resides in the secreted. Its function is as follows. This peptide hormone induces gall bladder contraction and the release of pancreatic enzymes in the gut. Its function in the brain is not clear. Binding to CCK-A receptors stimulates amylase release from the pancreas, binding to CCK-B receptors stimulates gastric acid secretion. The chain is Cholecystokinin (CCK) from Bos taurus (Bovine).